Here is a 424-residue protein sequence, read N- to C-terminus: MKLEMICTGEEVLSGQIVDTNAAWVANTLMELGIEMQHRVTVGDRMDDLVAAFQERSKHADVIIVNGGLGPTSDDMSALAMAKAKGEELVENVQWREHLEDWFTRNNRVMAKSNLKQAWLPASAVMVDNPVGTACGFRVKLNNAWLFFTPGVPFELKHMVTEQFIPFITEEFGVQEKSALEKLLTIGHGESSLADTLSEITLPAGIELGYRSSMPHIEIKIFARGDKAIRQLPDVTKQVKALLGCAVVAENRPTLAAEIHHRLYQSGFSLSVAESCTGGMITSQLIDFAGSSSYLHHGLVTYSNESKVKVLGVNPQILDDHGAVSIPTVEAMAQGVRGILDSDFALATSGIAGPDGGSDDKPVGTVAIALATKHGVYSQMVKLPKRSRQLVRSMSTAIAYDMLRRALLEEAVIVDYPSIPRFAK.

It belongs to the CinA family.

This Shewanella frigidimarina (strain NCIMB 400) protein is CinA-like protein.